The sequence spans 800 residues: Signaling protein YkoW (800 aa).

Helical transmembrane passes span 5–27 (VTYN…YISL), 44–66 (WLIG…GMMA), 76–98 (EFMP…LYFV), 103–125 (LTYY…MHYI), 135–157 (IIYE…FVSL), 178–200 (VSSI…AATF), and 215–237 (TFHW…LFSS). Residues 7–201 (YNTTLICLSI…YTGMLAATFH (195 aa)) enclose the MHYT domain. Residues 255–319 (QRFQSLIVHN…FEQVKKDKQA (65 aa)) enclose the PAS domain. A GGDEF domain is found at 402–536 (YNTVVFFLDL…NKSKYRYYSF (135 aa)). The region spanning 545 to 798 (KLNQEMVLRE…QFEQFIIEQP (254 aa)) is the EAL domain.

The protein resides in the cell membrane. Functionally, probable signaling protein whose physiological role is not yet known. The polypeptide is Signaling protein YkoW (ykoW) (Bacillus subtilis (strain 168)).